A 158-amino-acid chain; its full sequence is NAD(P)H-quinone oxidoreductase subunit J, chloroplastic (158 aa).

This sequence belongs to the complex I 30 kDa subunit family. In terms of assembly, NDH is composed of at least 16 different subunits, 5 of which are encoded in the nucleus.

The protein resides in the plastid. It localises to the chloroplast thylakoid membrane. It carries out the reaction a plastoquinone + NADH + (n+1) H(+)(in) = a plastoquinol + NAD(+) + n H(+)(out). The enzyme catalyses a plastoquinone + NADPH + (n+1) H(+)(in) = a plastoquinol + NADP(+) + n H(+)(out). Its function is as follows. NDH shuttles electrons from NAD(P)H:plastoquinone, via FMN and iron-sulfur (Fe-S) centers, to quinones in the photosynthetic chain and possibly in a chloroplast respiratory chain. The immediate electron acceptor for the enzyme in this species is believed to be plastoquinone. Couples the redox reaction to proton translocation, and thus conserves the redox energy in a proton gradient. This is NAD(P)H-quinone oxidoreductase subunit J, chloroplastic from Dioscorea elephantipes (Elephant's foot yam).